The sequence spans 311 residues: Aspartate carbamoyltransferase catalytic subunit (311 aa).

Positions 55 and 56 each coordinate carbamoyl phosphate. K85 provides a ligand contact to L-aspartate. R106, H135, and Q138 together coordinate carbamoyl phosphate. L-aspartate contacts are provided by R168 and R230. Carbamoyl phosphate is bound by residues L268 and P269.

The protein belongs to the aspartate/ornithine carbamoyltransferase superfamily. ATCase family. As to quaternary structure, heterododecamer (2C3:3R2) of six catalytic PyrB chains organized as two trimers (C3), and six regulatory PyrI chains organized as three dimers (R2).

It catalyses the reaction carbamoyl phosphate + L-aspartate = N-carbamoyl-L-aspartate + phosphate + H(+). It participates in pyrimidine metabolism; UMP biosynthesis via de novo pathway; (S)-dihydroorotate from bicarbonate: step 2/3. Its function is as follows. Catalyzes the condensation of carbamoyl phosphate and aspartate to form carbamoyl aspartate and inorganic phosphate, the committed step in the de novo pyrimidine nucleotide biosynthesis pathway. The polypeptide is Aspartate carbamoyltransferase catalytic subunit (Pectobacterium atrosepticum (strain SCRI 1043 / ATCC BAA-672) (Erwinia carotovora subsp. atroseptica)).